The chain runs to 132 residues: NADPH-dependent 7-cyano-7-deazaguanine reductase (132 aa).

Cys-34 functions as the Thioimide intermediate in the catalytic mechanism. The active-site Proton donor is the Asp-41. Residues 56 to 58 (IEL) and 75 to 76 (HE) each bind substrate.

This sequence belongs to the GTP cyclohydrolase I family. QueF type 1 subfamily.

It localises to the cytoplasm. It carries out the reaction 7-aminomethyl-7-carbaguanine + 2 NADP(+) = 7-cyano-7-deazaguanine + 2 NADPH + 3 H(+). The protein operates within tRNA modification; tRNA-queuosine biosynthesis. In terms of biological role, catalyzes the NADPH-dependent reduction of 7-cyano-7-deazaguanine (preQ0) to 7-aminomethyl-7-deazaguanine (preQ1). In Vesicomyosocius okutanii subsp. Calyptogena okutanii (strain HA), this protein is NADPH-dependent 7-cyano-7-deazaguanine reductase.